The following is a 401-amino-acid chain: uncharacterized protein (401 aa).

10 helical membrane-spanning segments follow: residues 20 to 40 (FFGELLTSLTGAMMGPFMVLY), 49 to 69 (IMMPMLIISLQPFADIFLTLA), 83 to 100 (ILTALLLQSAAMTGFVFA), 104 to 121 (YVFAILYVMNGIGRSLYI), 140 to 160 (VFAVINAIYSTGLTAGPLVGM), 167 to 187 (PVWIFALDAAALFIYFLIAAL), 207 to 227 (FTIYRPVLLLLLLSLPISMLY), 248 to 268 (MLTIYSAAKALFSCVLQVPLV), 289 to 309 (LAAAGFACSTSLTMLLVTAAV), and 357 to 377 (GLILTSFGGEVIFYALAVCLL).

Belongs to the major facilitator superfamily.

It localises to the cell membrane. This is an uncharacterized protein from Bacillus subtilis (strain 168).